A 302-amino-acid chain; its full sequence is Sulfate adenylyltransferase subunit 2 (302 aa).

This sequence belongs to the PAPS reductase family. CysD subfamily. As to quaternary structure, heterodimer composed of CysD, the smaller subunit, and CysN.

It carries out the reaction sulfate + ATP + H(+) = adenosine 5'-phosphosulfate + diphosphate. The protein operates within sulfur metabolism; hydrogen sulfide biosynthesis; sulfite from sulfate: step 1/3. With CysN forms the ATP sulfurylase (ATPS) that catalyzes the adenylation of sulfate producing adenosine 5'-phosphosulfate (APS) and diphosphate, the first enzymatic step in sulfur assimilation pathway. APS synthesis involves the formation of a high-energy phosphoric-sulfuric acid anhydride bond driven by GTP hydrolysis by CysN coupled to ATP hydrolysis by CysD. In Pectobacterium carotovorum subsp. carotovorum (strain PC1), this protein is Sulfate adenylyltransferase subunit 2.